We begin with the raw amino-acid sequence, 613 residues long: MSCKKRKSQISFNPRKNKKIKDYFSQVPKEEQNDPNTVKVDSKKMPRDITNTRDQRPLSPRKTRQDQTPPLNKKITVTLGVNSRKHKNMKYELTCRETSSLYAALNTLSAVREEVESQKGREMLVCGKEGIEGYLNLGMPVCCIPEGSHVVITFCQCKSKTQENKQFFESQDQASTNYVRFCIHAVGSKRKKILKCGELQKEGNKLCVYGFKGETIRDTLRKDGRFCTFIESDDWKLINDLDTIIENTQPVDELEGKLFQVAAELPKNPRVVSVTQNSGSENRNFHKLEEYIVNEYTTLKEEGKKLRAYIKEKSEKRKKKASLFKVHKEHFGKMTRNSTPVKVVKHLSRVSDSVGFLWWNNNGNAGCATCFVFKELYILTCQHVIASIVGEGIDSSEWANIISQCVKVTFDYEELLPTGDKFFMVKPWFEISDKHLDYAVLELKENGQEVPAGLYHRIRPVPHSGLIYIIGHPEGEKKSIDCCTVVPQSSRRKKCQENFQAREEAGFCFSTSFIHMYTQRSFQEMLHNSDVVTYDTSFFGGSSGSPVFDSNGSLVAMHAAGITCTYQAGVSNIIEFGSIMESIDDHMKQDKYKEWYNTISGNVQNVEMLSIDF.

The tract at residues 1–72 is disordered; that stretch reads MSCKKRKSQI…TRQDQTPPLN (72 aa). Residue Lys19 forms a Glycyl lysine isopeptide (Lys-Gly) (interchain with G-Cter in SUMO2) linkage. A Phosphoserine modification is found at Ser25. A Glycyl lysine isopeptide (Lys-Gly) (interchain with G-Cter in SUMO2) cross-link involves residue Lys29. A compositionally biased stretch (basic and acidic residues) spans 40 to 56; it reads VDSKKMPRDITNTRDQR. A Glycyl lysine isopeptide (Lys-Gly) (interchain with G-Cter in SUMO2) cross-link involves residue Lys62. Active-site charge relay system residues include His383, Asp437, and Ser543.

This sequence belongs to the FAM111 family. In terms of assembly, interacts (via PIP-box) with PCNA; this interaction is direct. Post-translationally, autocatalytically cleaved; autocatalytic cleavage takes place in trans.

Its subcellular location is the nucleus. The protein resides in the chromosome. It localises to the cytoplasm. Its function is as follows. Single-stranded DNA-binding serine protease that mediates the proteolytic cleavage of covalent DNA-protein cross-links (DPCs) during DNA synthesis, thereby playing a key role in maintaining genomic integrity. DPCs are highly toxic DNA lesions that interfere with essential chromatin transactions, such as replication and transcription, and which are induced by reactive agents, such as UV light or formaldehyde. Protects replication fork from stalling by removing DPCs, such as covalently trapped topoisomerase 1 (TOP1) adducts on DNA lesion, or poly(ADP-ribose) polymerase 1 (PARP1)-DNA complexes trapped by PARP inhibitors. Required for PCNA loading on replication sites. Promotes S-phase entry and DNA synthesis. This Mus musculus (Mouse) protein is Serine protease FAM111A.